Consider the following 251-residue polypeptide: Imidazole glycerol phosphate synthase subunit HisF (251 aa).

Residues Asp-11 and Asp-130 contribute to the active site.

Belongs to the HisA/HisF family. In terms of assembly, heterodimer of HisH and HisF.

Its subcellular location is the cytoplasm. The catalysed reaction is 5-[(5-phospho-1-deoxy-D-ribulos-1-ylimino)methylamino]-1-(5-phospho-beta-D-ribosyl)imidazole-4-carboxamide + L-glutamine = D-erythro-1-(imidazol-4-yl)glycerol 3-phosphate + 5-amino-1-(5-phospho-beta-D-ribosyl)imidazole-4-carboxamide + L-glutamate + H(+). Its pathway is amino-acid biosynthesis; L-histidine biosynthesis; L-histidine from 5-phospho-alpha-D-ribose 1-diphosphate: step 5/9. In terms of biological role, IGPS catalyzes the conversion of PRFAR and glutamine to IGP, AICAR and glutamate. The HisF subunit catalyzes the cyclization activity that produces IGP and AICAR from PRFAR using the ammonia provided by the HisH subunit. The polypeptide is Imidazole glycerol phosphate synthase subunit HisF (Chlorobium phaeobacteroides (strain DSM 266 / SMG 266 / 2430)).